Here is a 395-residue protein sequence, read N- to C-terminus: S-adenosylmethionine synthase (395 aa).

Histidine 16 contacts ATP. Residue aspartate 18 coordinates Mg(2+). Glutamate 44 serves as a coordination point for K(+). L-methionine-binding residues include glutamate 57 and glutamine 100. The segment at 100–110 (QSPDIAQGVDR) is flexible loop. Residues 167–169 (DAK), 233–234 (RF), aspartate 242, 248–249 (RK), alanine 265, and lysine 269 contribute to the ATP site. Residue aspartate 242 participates in L-methionine binding. Lysine 273 contributes to the L-methionine binding site.

It belongs to the AdoMet synthase family. Homotetramer; dimer of dimers. Mg(2+) is required as a cofactor. K(+) serves as cofactor.

The protein resides in the cytoplasm. The catalysed reaction is L-methionine + ATP + H2O = S-adenosyl-L-methionine + phosphate + diphosphate. Its pathway is amino-acid biosynthesis; S-adenosyl-L-methionine biosynthesis; S-adenosyl-L-methionine from L-methionine: step 1/1. Its function is as follows. Catalyzes the formation of S-adenosylmethionine (AdoMet) from methionine and ATP. The overall synthetic reaction is composed of two sequential steps, AdoMet formation and the subsequent tripolyphosphate hydrolysis which occurs prior to release of AdoMet from the enzyme. This Paraburkholderia phymatum (strain DSM 17167 / CIP 108236 / LMG 21445 / STM815) (Burkholderia phymatum) protein is S-adenosylmethionine synthase.